A 483-amino-acid chain; its full sequence is Probable zinc metalloprotease PTT_08196 (483 aa).

Positions 1 to 18 (MLFRSVILSNALLLPACA) are cleaved as a signal peptide. Asn-96 and Asn-121 each carry an N-linked (GlcNAc...) asparagine glycan. Zn(2+) contacts are provided by His-167, Asp-187, and Glu-220. N-linked (GlcNAc...) asparagine glycosylation occurs at Asn-235. Asp-247 provides a ligand contact to Zn(2+). N-linked (GlcNAc...) asparagine glycans are attached at residues Asn-310, Asn-362, Asn-401, Asn-411, and Asn-421. The 88-residue stretch at 396–483 (PAMPRNVTID…KSPAVYPFPA (88 aa)) folds into the Fibronectin type-III domain.

Belongs to the peptidase M28 family. M28B subfamily. Requires Zn(2+) as cofactor.

It is found in the secreted. The polypeptide is Probable zinc metalloprotease PTT_08196 (Pyrenophora teres f. teres (strain 0-1) (Barley net blotch fungus)).